Consider the following 434-residue polypeptide: Serine hydroxymethyltransferase (434 aa).

(6S)-5,6,7,8-tetrahydrofolate is bound by residues L133 and 137 to 139 (GHL). At K242 the chain carries N6-(pyridoxal phosphate)lysine.

Belongs to the SHMT family. In terms of assembly, homodimer. The cofactor is pyridoxal 5'-phosphate.

The protein localises to the cytoplasm. It carries out the reaction (6R)-5,10-methylene-5,6,7,8-tetrahydrofolate + glycine + H2O = (6S)-5,6,7,8-tetrahydrofolate + L-serine. It participates in one-carbon metabolism; tetrahydrofolate interconversion. Its pathway is amino-acid biosynthesis; glycine biosynthesis; glycine from L-serine: step 1/1. Its function is as follows. Catalyzes the reversible interconversion of serine and glycine with tetrahydrofolate (THF) serving as the one-carbon carrier. This reaction serves as the major source of one-carbon groups required for the biosynthesis of purines, thymidylate, methionine, and other important biomolecules. Also exhibits THF-independent aldolase activity toward beta-hydroxyamino acids, producing glycine and aldehydes, via a retro-aldol mechanism. This Caulobacter sp. (strain K31) protein is Serine hydroxymethyltransferase.